Reading from the N-terminus, the 278-residue chain is HTH-type transcriptional activator RhaS (278 aa).

In terms of domain architecture, HTH araC/xylS-type spans 174–272 (NLLLAWLEDH…NWSPRDIRQG (99 aa)). 2 DNA-binding regions (H-T-H motif) span residues 191 to 212 (DAVADQFSLSLRTLHRQLKQQT) and 239 to 262 (VTDIAYRCGFSDSNHFSTLFRREF).

As to quaternary structure, binds DNA as a dimer.

Its subcellular location is the cytoplasm. In terms of biological role, activates expression of the rhaBAD and rhaT operons. The sequence is that of HTH-type transcriptional activator RhaS from Escherichia coli O81 (strain ED1a).